The sequence spans 123 residues: Ribosome-binding factor A (123 aa).

The protein belongs to the RbfA family. Monomer. Binds 30S ribosomal subunits, but not 50S ribosomal subunits or 70S ribosomes.

Its subcellular location is the cytoplasm. Functionally, one of several proteins that assist in the late maturation steps of the functional core of the 30S ribosomal subunit. Associates with free 30S ribosomal subunits (but not with 30S subunits that are part of 70S ribosomes or polysomes). Required for efficient processing of 16S rRNA. May interact with the 5'-terminal helix region of 16S rRNA. This Lactobacillus gasseri (strain ATCC 33323 / DSM 20243 / BCRC 14619 / CIP 102991 / JCM 1131 / KCTC 3163 / NCIMB 11718 / NCTC 13722 / AM63) protein is Ribosome-binding factor A.